The primary structure comprises 142 residues: MAKKVEAYIKLQVAAGMANPSPPVGPALGQRGVNIMEFCKAFNAKTESMEKGLPVPVVITVYSDRSFTFVTKTSPAAVLLKKAAGIKSGSGRPNTEKVGTVTDAQIQEIAEAKAADMTGADIEAMKRSIAGTARSMGLVVEG.

Belongs to the universal ribosomal protein uL11 family. Part of the ribosomal stalk of the 50S ribosomal subunit. Interacts with L10 and the large rRNA to form the base of the stalk. L10 forms an elongated spine to which L12 dimers bind in a sequential fashion forming a multimeric L10(L12)X complex. In terms of processing, one or more lysine residues are methylated.

Its function is as follows. Forms part of the ribosomal stalk which helps the ribosome interact with GTP-bound translation factors. The protein is Large ribosomal subunit protein uL11 of Vibrio vulnificus (strain CMCP6).